The primary structure comprises 142 residues: MAP3K7 C-terminal-like protein (142 aa).

Detected in lung and peripheral blood leukocytes. Expressed predominantly in peripheral blood leukocytes and ubiquitously in adult and fetal tissues. Also expressed strongly in breast carcinoma GI-101, colon adenocarcinoma GI-112, and prostatic adenocarcinoma PC3.

The protein is MAP3K7 C-terminal-like protein (MAP3K7CL) of Homo sapiens (Human).